The following is a 1376-amino-acid chain: Protein FAM135B (1376 aa).

A compositionally biased stretch (acidic residues) spans 431 to 442; it reads NEDECEFSEESP. Residues 431–489 form a disordered region; sequence NEDECEFSEESPSENTHVGSKPHSIQSTTVHENASFEKPNVGTKAQEDCSTEGPEQGFD. Residues 443 to 462 show a composition bias toward polar residues; that stretch reads SENTHVGSKPHSIQSTTVHE.

It belongs to the FAM135 family.

In Xenopus laevis (African clawed frog), this protein is Protein FAM135B (fam135b).